Reading from the N-terminus, the 38-residue chain is Tyrosinase inhibitor (38 aa).

Intrachain disulfides connect Cys-11/Cys-25, Cys-18/Cys-29, and Cys-24/Cys-36. 3',4'-dihydroxyphenylalanine is present on Tyr-32.

As to quaternary structure, monomer. In terms of processing, contains L-DOPA (3',4'-dihydroxyphenylalanine).

Its subcellular location is the secreted. In terms of biological role, potent reversible, competitive inhibitor of tyrosinase (phenol oxidase) in the nanomolar range. The chain is Tyrosinase inhibitor from Musca domestica (House fly).